The following is a 142-amino-acid chain: Probable inactive dual specificity protein phosphatase-like At4g18593 (142 aa).

The protein belongs to the protein-tyrosine phosphatase family. Non-receptor class dual specificity subfamily.

The polypeptide is Probable inactive dual specificity protein phosphatase-like At4g18593 (Arabidopsis thaliana (Mouse-ear cress)).